A 1133-amino-acid polypeptide reads, in one-letter code: Myb-binding protein 1A (1133 aa).

Disordered regions lie at residues 1–62 (MKSK…ENTA), 718–764 (PLSK…DAES), 924–943 (GEEH…SRQA), and 1111–1133 (KKVA…EEST). Composition is skewed to basic and acidic residues over residues 20 to 35 (KAKE…KSEA) and 50 to 60 (EKPAETEEKEN). 2 stretches are compositionally biased toward acidic residues: residues 725–735 (GEEESDDELDK) and 744–762 (DDSE…EDDA).

This sequence belongs to the MYBBP1A family. In terms of assembly, interacts with nclb.

It is found in the cytoplasm. The protein resides in the nucleus. The protein localises to the nucleolus. Has a role in rRNA biogenesis, cell proliferation and tissue growth by contributing to the localization of nclb to the nucleolus. This is Myb-binding protein 1A from Drosophila melanogaster (Fruit fly).